The sequence spans 937 residues: Protein translocase subunit SecA (937 aa).

Residues glutamine 90, 108–112 (GEGKT), and aspartate 509 contribute to the ATP site.

Belongs to the SecA family. Monomer and homodimer. Part of the essential Sec protein translocation apparatus which comprises SecA, SecYEG and auxiliary proteins SecDF. Other proteins may also be involved.

The protein resides in the cell inner membrane. The protein localises to the cellular thylakoid membrane. It localises to the cytoplasm. The catalysed reaction is ATP + H2O + cellular proteinSide 1 = ADP + phosphate + cellular proteinSide 2.. Its function is as follows. Part of the Sec protein translocase complex. Interacts with the SecYEG preprotein conducting channel. Has a central role in coupling the hydrolysis of ATP to the transfer of proteins into and across the cell membrane, serving as an ATP-driven molecular motor driving the stepwise translocation of polypeptide chains across the membrane. Probably participates in protein translocation into and across both the cytoplasmic and thylakoid membranes in cyanobacterial cells. This Synechococcus sp. (strain CC9902) protein is Protein translocase subunit SecA.